The chain runs to 83 residues: U-actitoxin-Aeq6a (83 aa).

The signal sequence occupies residues 1-20 (MIYKAVFVCLVLVLLGDVFC). Residues 21–36 (SPRNSGGGTLNDNPFE) constitute a propeptide that is removed on maturation. Proline 82 carries the post-translational modification Proline amide.

Contains 3 disulfide bonds. As to expression, expressed by acrorhagi.

It is found in the secreted. It localises to the nematocyst. Its function is as follows. Toxin. This chain is U-actitoxin-Aeq6a, found in Actinia equina (Beadlet anemone).